The sequence spans 328 residues: MNQVDYLRISLIDRCNFRCQYCMPEGVELDYILKQQLLTNEELLTLIREVFIPVGFNRFRLTGGEPLLRPRVVDLVSAIATLPQTQDLSMTTNGFLLAPMAQNLYNAGLRRINISLDSLDADTFDQIIGNQGRSRWQQVWHGIQAAHSVGFDPLKLNVVVIPGVNDHEILDLAALTIDKQWHVRFIEFMPIGNVDLFGDRGWVSSAELRQQIRDRWGLTESQVRGAGPADVFKIPGAKGTLGFISQMSECFCDRCNRMRLSADGWLRPCLLNETGQIDLKTALRSGTSTAQLQEQVRHLLRMKPEINFKGRDSGIVGTYTRTMSQIGG.

In terms of domain architecture, Radical SAM core spans 1 to 229 (MNQVDYLRIS…ESQVRGAGPA (229 aa)). Position 8 (Arg8) interacts with GTP. [4Fe-4S] cluster-binding residues include Cys15 and Cys19. Tyr21 contributes to the S-adenosyl-L-methionine binding site. Cys22 contributes to the [4Fe-4S] cluster binding site. Arg60 provides a ligand contact to GTP. Residue Gly64 coordinates S-adenosyl-L-methionine. Thr91 is a binding site for GTP. Residue Ser115 participates in S-adenosyl-L-methionine binding. Lys155 contacts GTP. Met189 provides a ligand contact to S-adenosyl-L-methionine. Residues Cys252 and Cys255 each coordinate [4Fe-4S] cluster. Position 257–259 (257–259 (RMR)) interacts with GTP. Cys269 lines the [4Fe-4S] cluster pocket.

The protein belongs to the radical SAM superfamily. MoaA family. In terms of assembly, monomer and homodimer. [4Fe-4S] cluster is required as a cofactor.

The catalysed reaction is GTP + AH2 + S-adenosyl-L-methionine = (8S)-3',8-cyclo-7,8-dihydroguanosine 5'-triphosphate + 5'-deoxyadenosine + L-methionine + A + H(+). It functions in the pathway cofactor biosynthesis; molybdopterin biosynthesis. Catalyzes the cyclization of GTP to (8S)-3',8-cyclo-7,8-dihydroguanosine 5'-triphosphate. The sequence is that of GTP 3',8-cyclase from Nostoc punctiforme (strain ATCC 29133 / PCC 73102).